The primary structure comprises 446 residues: Exodeoxyribonuclease 7 large subunit (446 aa).

It belongs to the XseA family. As to quaternary structure, heterooligomer composed of large and small subunits.

It localises to the cytoplasm. The enzyme catalyses Exonucleolytic cleavage in either 5'- to 3'- or 3'- to 5'-direction to yield nucleoside 5'-phosphates.. Its function is as follows. Bidirectionally degrades single-stranded DNA into large acid-insoluble oligonucleotides, which are then degraded further into small acid-soluble oligonucleotides. The protein is Exodeoxyribonuclease 7 large subunit of Ligilactobacillus salivarius (strain UCC118) (Lactobacillus salivarius).